Consider the following 391-residue polypeptide: Phosphoglycerate kinase (391 aa).

Residues 19 to 21, arginine 35, 58 to 61, arginine 117, and arginine 150 each bind substrate; these read DYN and HMGR. ATP is bound by residues lysine 201, glutamate 323, and 349–352; that span reads GGDT.

This sequence belongs to the phosphoglycerate kinase family. As to quaternary structure, monomer.

The protein resides in the cytoplasm. The catalysed reaction is (2R)-3-phosphoglycerate + ATP = (2R)-3-phospho-glyceroyl phosphate + ADP. It participates in carbohydrate degradation; glycolysis; pyruvate from D-glyceraldehyde 3-phosphate: step 2/5. The chain is Phosphoglycerate kinase from Desulforapulum autotrophicum (strain ATCC 43914 / DSM 3382 / VKM B-1955 / HRM2) (Desulfobacterium autotrophicum).